Here is a 595-residue protein sequence, read N- to C-terminus: Chaperone protein HscA homolog (595 aa).

The protein belongs to the heat shock protein 70 family.

In terms of biological role, chaperone involved in the maturation of iron-sulfur cluster-containing proteins. Has a low intrinsic ATPase activity which is markedly stimulated by HscB. This chain is Chaperone protein HscA homolog, found in Rickettsia africae (strain ESF-5).